Reading from the N-terminus, the 108-residue chain is Protein YcgL (108 aa).

The YcgL domain occupies Met12–Leu96.

In Escherichia coli O9:H4 (strain HS), this protein is Protein YcgL.